Here is a 291-residue protein sequence, read N- to C-terminus: Light-independent protochlorophyllide reductase iron-sulfur ATP-binding protein (291 aa).

ATP is bound by residues 10 to 15 (GIGKST) and Lys39. Ser14 serves as a coordination point for Mg(2+). [4Fe-4S] cluster contacts are provided by Cys95 and Cys129. Position 180–181 (180–181 (NR)) interacts with ATP.

It belongs to the NifH/BchL/ChlL family. In terms of assembly, homodimer. Protochlorophyllide reductase is composed of three subunits; ChlL, ChlN and ChlB. Requires [4Fe-4S] cluster as cofactor.

It localises to the plastid. Its subcellular location is the chloroplast. It carries out the reaction chlorophyllide a + oxidized 2[4Fe-4S]-[ferredoxin] + 2 ADP + 2 phosphate = protochlorophyllide a + reduced 2[4Fe-4S]-[ferredoxin] + 2 ATP + 2 H2O. It functions in the pathway porphyrin-containing compound metabolism; chlorophyll biosynthesis (light-independent). Component of the dark-operative protochlorophyllide reductase (DPOR) that uses Mg-ATP and reduced ferredoxin to reduce ring D of protochlorophyllide (Pchlide) to form chlorophyllide a (Chlide). This reaction is light-independent. The L component serves as a unique electron donor to the NB-component of the complex, and binds Mg-ATP. The protein is Light-independent protochlorophyllide reductase iron-sulfur ATP-binding protein of Larix decidua (European larch).